Here is a 206-residue protein sequence, read N- to C-terminus: Triafestin-1 (206 aa).

Residues 1–18 (MKTILAVIFFGILAFAFA) form the signal peptide. N55 carries an N-linked (GlcNAc...) asparagine glycan.

This sequence belongs to the calycin superfamily. Triabin family. In terms of assembly, interacts with host coagulation factor XII (F12) (inactive and activated) (via amino acids 1-77). Interacts with host high molecular weight kininogen (KNG1) (via amino acids 402-532). Salivary gland (at protein level).

It is found in the secreted. Its activity is regulated as follows. Zn(2+) modulates binding to host coagulation factor XII (F12) and high molecular weight kininogen (KNG1). Its function is as follows. Suppresses activation of the host plasma kallikrein-kinin system, leading to inhibition of the intrinsic coagulation pathway. Blocks host coagulation factor XII (F12) and prekallikrein (KLKB1) reciprocal activation without affecting their amidolytic activities. Blocks binding of host F12 and high molecular weight kininogen (KNG1) to negatively charged surfaces. Attenuates generation of bradykinin by interfering with activation of host kallikrein-kinin system. The polypeptide is Triafestin-1 (Triatoma infestans (Assassin bug)).